A 218-amino-acid polypeptide reads, in one-letter code: Pyridoxine/pyridoxamine 5'-phosphate oxidase (218 aa).

Residues R66–K71, R87, K88, and Q110 contribute to the FMN site. Residue K71 participates in substrate binding. Substrate-binding residues include Y128, R132, and S136. FMN is bound by residues Q145–S146 and W190. R196–H198 contributes to the substrate binding site. R200 lines the FMN pocket.

The protein belongs to the pyridoxamine 5'-phosphate oxidase family. In terms of assembly, homodimer. It depends on FMN as a cofactor.

It carries out the reaction pyridoxamine 5'-phosphate + O2 + H2O = pyridoxal 5'-phosphate + H2O2 + NH4(+). The enzyme catalyses pyridoxine 5'-phosphate + O2 = pyridoxal 5'-phosphate + H2O2. Its pathway is cofactor metabolism; pyridoxal 5'-phosphate salvage; pyridoxal 5'-phosphate from pyridoxamine 5'-phosphate: step 1/1. It functions in the pathway cofactor metabolism; pyridoxal 5'-phosphate salvage; pyridoxal 5'-phosphate from pyridoxine 5'-phosphate: step 1/1. Its function is as follows. Catalyzes the oxidation of either pyridoxine 5'-phosphate (PNP) or pyridoxamine 5'-phosphate (PMP) into pyridoxal 5'-phosphate (PLP). This chain is Pyridoxine/pyridoxamine 5'-phosphate oxidase, found in Anaplasma marginale (strain St. Maries).